Reading from the N-terminus, the 210-residue chain is Kalata-B2 (210 aa).

The signal sequence occupies residues 1–22 (MAKFTNCLVLSLLLAAFVGAFG). Residues 23–66 (AEFSEADKATLVNDIAENIQKEILGEVKTSETVLTMFLKEMQLK) constitute a propeptide that is removed on maturation. The cyclopeptide (Gly-Asp) cross-link spans 67–95 (GLPVCGETCFGGTCNTPGCSCTWPICTRD). 3 disulfide bridges follow: Cys71–Cys85, Cys75–Cys87, and Cys80–Cys92. A propeptide spanning residues 96–120 (SLPMRAGGKTSETTLHMFLKEMQLK) is cleaved from the precursor. Residues 121 to 149 (GLPVCGETCFGGTCNTPGCSCTWPICTRD) constitute a cross-link (cyclopeptide (Gly-Asp)). 3 cysteine pairs are disulfide-bonded: Cys125–Cys139, Cys129–Cys141, and Cys134–Cys146. The propeptide occupies 150–174 (SLPMSAGGKTSETTLHMFLKEMQLK). The cyclopeptide (Gly-Asp) cross-link spans 175–203 (GLPVCGETCFGGTCNTPGCSCTWPICTRD). Disulfide bonds link Cys179/Cys193, Cys183/Cys195, and Cys188/Cys200. Positions 204 to 210 (SLPLVAA) are excised as a propeptide.

It belongs to the cyclotide family. Moebius subfamily. In terms of processing, kalata-B2 is a cyclic peptide which occurs in three forms: with unmodified Trp, with Trp oxidized to form N-formylkynurenine and with Trp oxidized to form kynurenine. Oxidation is enhanced by exposure to sunlight.

Functionally, probably participates in a plant defense mechanism. Inhibitory effect on the growth and development of larvae from Helicoverpa punctigera. Has hemolytic activity. This Oldenlandia affinis protein is Kalata-B2 (OAK4).